A 363-amino-acid polypeptide reads, in one-letter code: Ribonuclease D (363 aa).

In terms of domain architecture, 3'-5' exonuclease spans 5–168 (ITHPSELTDR…AIHDELTRRL (164 aa)). The 81-residue stretch at 208-288 (EPAAQRRLLR…NTPLPDEEHA (81 aa)) folds into the HRDC domain.

The protein belongs to the RNase D family. The cofactor is a divalent metal cation.

Its subcellular location is the cytoplasm. The enzyme catalyses Exonucleolytic cleavage that removes extra residues from the 3'-terminus of tRNA to produce 5'-mononucleotides.. In terms of biological role, exonuclease involved in the 3' processing of various precursor tRNAs. Initiates hydrolysis at the 3'-terminus of an RNA molecule and releases 5'-mononucleotides. The sequence is that of Ribonuclease D from Xanthomonas oryzae pv. oryzae (strain KACC10331 / KXO85).